Here is an 811-residue protein sequence, read N- to C-terminus: MSDQPPPYTPLPLLSSFPPNPYPDQTPDPASTPTLVLPNPAFPNKRKRTGFRRKLPSGSPAAPVAVAASPSAQPPPRASAADDIIVINREPTAEAVTALTAGFPADSLTDEEIEAGVVSDVGGIEQVNYILIRNHLLTRWRETFNSWLAKESFATLIPPHCDHLLNAAYSFLVSHGHINFGVAPAIKERIPKEPTRHNTVIVVGAGLAGLAAARQLVAFGFKVVVLEGRKRCGGRVYTKKMEGGGRSAAGDLGGSVLTGTFGNPLGIVAKQLGLPMHKIRDKCPLYRPDGSPVDPEVDKKVEGTFNKLLDKSSLLRASMGDVAMDVSLGAALETLRQTDGDLSTDQEMNLFNWHLANLEYANAGLLSKLSLAFWDQDDPYDMGGDHCFLPGGNGRLVQALAENVPIVYERTVHTIRNGGDGVQVVVNGGQVYEGDMALCTVPLGVLKNGGVKFVPELPQRKLDSIKRLGFGLLNKVAMLFPHVFWSTDLDTFGHLTEDPSHRGEFFLFYSYATVAGGPLLMALVAGEAAHNFETTPPTDAVSSVLKILRGIYEPQGIEVPDPLQSVCTRWGTDSFSLGSYSHVAVGASGDDYDILAESVGDGRLFFAGEATTRRYPATMHGAFISGLREAANITLHANARAAKSKVEKGPSTNTQACAALLMDLFRQPDLEFGSFSVIFGGQASDPKSPAILKVELGGPRKKGATEGGKADQHHSNKLLFQQLQSHFNQQQQLYVYTLLSRQQAMELREVRGGDEMRLHYLCEKLGVKLVGRKGLGPGADAVIASIKAERNSSRTKTRPSKLKIGIPKSKS.

Pro residues predominate over residues 1 to 10; sequence MSDQPPPYTP. The disordered stretch occupies residues 1–79; sequence MSDQPPPYTP…PSAQPPPRAS (79 aa). Basic residues predominate over residues 44–55; that stretch reads NKRKRTGFRRKL. Residues 56–71 are compositionally biased toward low complexity; the sequence is PSGSPAAPVAVAASPS. Residues 88–189 enclose the SWIRM domain; the sequence is NREPTAEAVT…FGVAPAIKER (102 aa). 4 residues coordinate FAD: E227, R229, R235, and E609. The segment at 790–811 is disordered; that stretch reads RNSSRTKTRPSKLKIGIPKSKS.

The protein belongs to the flavin monoamine oxidase family. Requires FAD as cofactor.

In terms of biological role, probable histone demethylase. The chain is Lysine-specific histone demethylase 1 homolog 3 from Oryza sativa subsp. indica (Rice).